Here is a 191-residue protein sequence, read N- to C-terminus: Phosphopantetheine adenylyltransferase (191 aa).

Ser8 is a substrate binding site. ATP is bound by residues 8-9 and His16; that span reads SF. Substrate-binding residues include Lys40, Thr72, and Arg86. ATP contacts are provided by residues 87–89, Glu97, and 122–128; these read GLR and YSFLSSS.

Belongs to the bacterial CoaD family. In terms of assembly, homohexamer. Mg(2+) serves as cofactor.

The protein resides in the cytoplasm. The enzyme catalyses (R)-4'-phosphopantetheine + ATP + H(+) = 3'-dephospho-CoA + diphosphate. The protein operates within cofactor biosynthesis; coenzyme A biosynthesis; CoA from (R)-pantothenate: step 4/5. Reversibly transfers an adenylyl group from ATP to 4'-phosphopantetheine, yielding dephospho-CoA (dPCoA) and pyrophosphate. This chain is Phosphopantetheine adenylyltransferase, found in Nostoc sp. (strain PCC 7120 / SAG 25.82 / UTEX 2576).